We begin with the raw amino-acid sequence, 77 residues long: Secapin (77 aa).

Positions methionine 1–alanine 32 are cleaved as a signal peptide. The propeptide occupies valine 33–arginine 52. A disulfide bond links cysteine 61 and cysteine 72.

This sequence belongs to the secapin family. In terms of tissue distribution, expressed by the venom gland.

The protein resides in the secreted. Functionally, serine protease inhibitor which exhibits antifibrinolytic, antielastolytic and antimicrobial activities. Displays antimicrobial activity against bacteria and fungi. Likely functions in the innate immune response to microbial infection and possibly in the venom, as an antifibrinolytic agent. Not toxic to mice but does induce slight sedation at higher doses (from 40 mg/kg). At a dose of 80 mg/kg, sedation occurs 15 minutes after injection and is accompanied by piloerection and hypothermia. The sequence is that of Secapin from Apis mellifera (Honeybee).